The chain runs to 402 residues: Phosphoglycerate kinase (402 aa).

Substrate-binding positions include 29–31 (DFN), Arg-45, 69–72 (HLGR), Arg-125, and Arg-158. ATP-binding positions include Lys-209, Glu-331, and 357-360 (GGDT).

This sequence belongs to the phosphoglycerate kinase family.

The protein resides in the cytoplasm. It carries out the reaction (2R)-3-phosphoglycerate + ATP = (2R)-3-phospho-glyceroyl phosphate + ADP. Its pathway is carbohydrate degradation; glycolysis; pyruvate from D-glyceraldehyde 3-phosphate: step 2/5. This chain is Phosphoglycerate kinase (pgk), found in Helicobacter pylori (strain J99 / ATCC 700824) (Campylobacter pylori J99).